Reading from the N-terminus, the 458-residue chain is ATP synthase subunit beta (458 aa).

Residue 148–155 (GGAGVGKT) coordinates ATP.

The protein belongs to the ATPase alpha/beta chains family. In terms of assembly, F-type ATPases have 2 components, CF(1) - the catalytic core - and CF(0) - the membrane proton channel. CF(1) has five subunits: alpha(3), beta(3), gamma(1), delta(1), epsilon(1). CF(0) has three main subunits: a(1), b(2) and c(9-12). The alpha and beta chains form an alternating ring which encloses part of the gamma chain. CF(1) is attached to CF(0) by a central stalk formed by the gamma and epsilon chains, while a peripheral stalk is formed by the delta and b chains.

It is found in the cell inner membrane. The enzyme catalyses ATP + H2O + 4 H(+)(in) = ADP + phosphate + 5 H(+)(out). Its function is as follows. Produces ATP from ADP in the presence of a proton gradient across the membrane. The catalytic sites are hosted primarily by the beta subunits. This is ATP synthase subunit beta from Francisella philomiragia subsp. philomiragia (strain ATCC 25017 / CCUG 19701 / FSC 153 / O#319-036).